A 914-amino-acid chain; its full sequence is Exoglucanase-2 (914 aa).

Residues 1-33 (MKRRLMKGISLLTLVFLIGIMLQLSLKSELTAY) form the signal peptide. Residues 763 to 914 (VEGVLIIQSF…SGNLVYGIEP (152 aa)) enclose the CBM3 domain.

Belongs to the glycosyl hydrolase 48 (cellulase L) family.

The catalysed reaction is Hydrolysis of (1-&gt;4)-beta-D-glucosidic linkages in cellulose and cellotetraose, releasing cellobiose from the non-reducing ends of the chains.. The sequence is that of Exoglucanase-2 (celY) from Thermoclostridium stercorarium (strain ATCC 35414 / DSM 8532 / NCIMB 11754) (Clostridium stercorarium).